A 160-amino-acid chain; its full sequence is Cytochrome b6-f complex subunit 4 (160 aa).

Helical transmembrane passes span 36-56 (LLYI…GLAV), 95-115 (LLGV…PFLE), and 131-151 (TVFL…TLPI).

This sequence belongs to the cytochrome b family. PetD subfamily. The 4 large subunits of the cytochrome b6-f complex are cytochrome b6, subunit IV (17 kDa polypeptide, petD), cytochrome f and the Rieske protein, while the 4 small subunits are petG, petL, petM and petN. The complex functions as a dimer.

It localises to the plastid. The protein resides in the chloroplast thylakoid membrane. Its function is as follows. Component of the cytochrome b6-f complex, which mediates electron transfer between photosystem II (PSII) and photosystem I (PSI), cyclic electron flow around PSI, and state transitions. The sequence is that of Cytochrome b6-f complex subunit 4 from Spinacia oleracea (Spinach).